Here is a 286-residue protein sequence, read N- to C-terminus: Thymidylate synthase (286 aa).

Residue 140-141 coordinates dUMP; the sequence is RR. The Nucleophile role is filled by C161. DUMP-binding positions include 185–188, N196, and 226–228; these read RSND and HIY. A (6R)-5,10-methylene-5,6,7,8-tetrahydrofolate-binding site is contributed by D188. A285 lines the (6R)-5,10-methylene-5,6,7,8-tetrahydrofolate pocket.

Belongs to the thymidylate synthase family. Bacterial-type ThyA subfamily. Homodimer.

It localises to the cytoplasm. The catalysed reaction is dUMP + (6R)-5,10-methylene-5,6,7,8-tetrahydrofolate = 7,8-dihydrofolate + dTMP. The protein operates within pyrimidine metabolism; dTTP biosynthesis. Catalyzes the reductive methylation of 2'-deoxyuridine-5'-monophosphate (dUMP) to 2'-deoxythymidine-5'-monophosphate (dTMP) while utilizing 5,10-methylenetetrahydrofolate (mTHF) as the methyl donor and reductant in the reaction, yielding dihydrofolate (DHF) as a by-product. This enzymatic reaction provides an intracellular de novo source of dTMP, an essential precursor for DNA biosynthesis. In Streptococcus thermophilus (strain CNRZ 1066), this protein is Thymidylate synthase.